The primary structure comprises 141 residues: D-aminoacyl-tRNA deacylase (141 aa).

A Gly-cisPro motif, important for rejection of L-amino acids motif is present at residues 133–134 (GP).

The protein belongs to the DTD family. As to quaternary structure, homodimer.

The protein resides in the cytoplasm. It carries out the reaction glycyl-tRNA(Ala) + H2O = tRNA(Ala) + glycine + H(+). The catalysed reaction is a D-aminoacyl-tRNA + H2O = a tRNA + a D-alpha-amino acid + H(+). Functionally, an aminoacyl-tRNA editing enzyme that deacylates mischarged D-aminoacyl-tRNAs. Also deacylates mischarged glycyl-tRNA(Ala), protecting cells against glycine mischarging by AlaRS. Acts via tRNA-based rather than protein-based catalysis; rejects L-amino acids rather than detecting D-amino acids in the active site. By recycling D-aminoacyl-tRNA to D-amino acids and free tRNA molecules, this enzyme counteracts the toxicity associated with the formation of D-aminoacyl-tRNA entities in vivo and helps enforce protein L-homochirality. This is D-aminoacyl-tRNA deacylase from Nautilia profundicola (strain ATCC BAA-1463 / DSM 18972 / AmH).